Consider the following 255-residue polypeptide: MNLILLCSQILLLLFTVANCDGEHQLDSSMDLKSDSTKSAVLKNVAPKNDATQAEIAKDDVALKSGKKGDYVMEIDVSDIPLDDYPINNSKSRKNSSTLPSQILTDKPNQGSNQIALKALKHRLLMEQNNNLFLRNHSVSLMNEIEARKTDIIQARQLNIDLELELEALKRELSEMNAQNARKSTKSCKKRPSKDIASPVNQLQEVIVKNTYRNKYLTLLTQLAQKINYEIANVNNPATDVPTGKSPSEGNPSTT.

The N-terminal stretch at 1–18 (MNLILLCSQILLLLFTVA) is a signal peptide. The tract at residues 86 to 110 (PINNSKSRKNSSTLPSQILTDKPNQ) is disordered. Residues 87–110 (INNSKSRKNSSTLPSQILTDKPNQ) show a composition bias toward polar residues. 3 N-linked (GlcNAc...) asparagine glycosylation sites follow: N88, N95, and N136. Disordered stretches follow at residues 177 to 196 (NAQN…SKDI) and 235 to 255 (NNPA…PSTT). Over residues 183-192 (KSTKSCKKRP) the composition is skewed to basic residues. Over residues 245–255 (KSPSEGNPSTT) the composition is skewed to polar residues.

It undergoes several cleavages as it is secreted and it is further processed in the recipient female. As to expression, main cells of the accessory glands of males.

The protein localises to the secreted. It localises to the extracellular space. This protein is transferred from male to female's hemolymph during mating, affecting egglaying and behavior after mating. The sequence is that of Accessory gland-specific peptide 26Aa (Acp26Aa) from Drosophila sechellia (Fruit fly).